Reading from the N-terminus, the 197-residue chain is GCN5-related N-acetyltransferase 1, chloroplastic (197 aa).

A chloroplast-targeting transit peptide spans 1 to 37 (MFLGGTISTPPASLRLRSTLNPQNAVTQSSSQATFPA). Over residues 23-34 (QNAVTQSSSQAT) the composition is skewed to polar residues. A disordered region spans residues 23 to 46 (QNAVTQSSSQATFPAAMQRKPPSY). Residues 58–195 (FLLRRTTEGL…GMVFIRKQRN (138 aa)) form the N-acetyltransferase domain. Residues 129-131 (VVV), 137-142 (SCGLGK), 165-167 (EPR), and Tyr172 each bind acetyl-CoA. Tyr172 (proton donor) is an active-site residue.

It belongs to the acetyltransferase family. GNAT subfamily. In terms of assembly, oligomer. Post-translationally, autoacetylated. As to expression, expressed in green tissues. Accumulates mainly in flowers and young leaves, and, to a lower extent, in stems and mature leaves, but barely in roots.

The protein resides in the plastid. It localises to the chloroplast. The catalysed reaction is an N-terminal L-alpha-aminoacyl-[protein] + acetyl-CoA = N-terminal N(alpha)-acetyl-L-alpha-aminoacyl-[protein] + CoA + H(+). It carries out the reaction L-lysyl-[protein] + acetyl-CoA = N(6)-acetyl-L-lysyl-[protein] + CoA + H(+). The enzyme catalyses 5-methoxytryptamine + acetyl-CoA = melatonin + CoA + H(+). It catalyses the reaction serotonin + acetyl-CoA = N-acetylserotonin + CoA + H(+). Its activity is regulated as follows. Inhibited by 5-methoxytryptamine in vitro. Functionally, protein acetyltransferase with dual specificity triggering both N-alpha-acetylation (NTA) and epsilon-lysine acetylation (KA), possibly with a low efficiency or toward specific plastid substrates. Involved in melatonin biosynthesis by catalyzing the formation of N-acetylserotonin (NAS) from serotonin and of melatonin (N-acetyl-5-methoxytryptamine) from 5-methoxytryptamine (5-MT). The sequence is that of GCN5-related N-acetyltransferase 1, chloroplastic from Arabidopsis thaliana (Mouse-ear cress).